The sequence spans 880 residues: Alanine--tRNA ligase (880 aa).

Zn(2+)-binding residues include His567, His571, Cys669, and His673.

It belongs to the class-II aminoacyl-tRNA synthetase family. Zn(2+) serves as cofactor.

The protein resides in the cytoplasm. The enzyme catalyses tRNA(Ala) + L-alanine + ATP = L-alanyl-tRNA(Ala) + AMP + diphosphate. In terms of biological role, catalyzes the attachment of alanine to tRNA(Ala) in a two-step reaction: alanine is first activated by ATP to form Ala-AMP and then transferred to the acceptor end of tRNA(Ala). Also edits incorrectly charged Ser-tRNA(Ala) and Gly-tRNA(Ala) via its editing domain. This chain is Alanine--tRNA ligase, found in Bacillus mycoides (strain KBAB4) (Bacillus weihenstephanensis).